A 291-amino-acid chain; its full sequence is uncharacterized protein (291 aa).

The tract at residues methionine 1–histidine 82 is disordered. Composition is skewed to low complexity over residues histidine 28–serine 43 and serine 59–proline 78.

This is an uncharacterized protein from Arabidopsis thaliana (Mouse-ear cress).